The sequence spans 456 residues: GTPase Der (456 aa).

EngA-type G domains lie at 2–167 (LKVA…DQFG) and 176–351 (ATFC…AQLK). Residues 8–15 (GKPNVGKS), 55–59 (DTGGL), 118–121 (NKIE), 182–189 (GKPNVGKS), 229–233 (DTAGI), and 294–297 (NKWD) each bind GTP. In terms of domain architecture, KH-like spans 352 to 436 (IKISTSLLND…PITLYFKSKN (85 aa)).

It belongs to the TRAFAC class TrmE-Era-EngA-EngB-Septin-like GTPase superfamily. EngA (Der) GTPase family. As to quaternary structure, associates with the 50S ribosomal subunit.

Functionally, GTPase that plays an essential role in the late steps of ribosome biogenesis. In Mycoplasmoides gallisepticum (strain R(low / passage 15 / clone 2)) (Mycoplasma gallisepticum), this protein is GTPase Der.